The following is a 237-amino-acid chain: Phosphoribosylaminoimidazole-succinocarboxamide synthase (237 aa).

It belongs to the SAICAR synthetase family.

It catalyses the reaction 5-amino-1-(5-phospho-D-ribosyl)imidazole-4-carboxylate + L-aspartate + ATP = (2S)-2-[5-amino-1-(5-phospho-beta-D-ribosyl)imidazole-4-carboxamido]succinate + ADP + phosphate + 2 H(+). Its pathway is purine metabolism; IMP biosynthesis via de novo pathway; 5-amino-1-(5-phospho-D-ribosyl)imidazole-4-carboxamide from 5-amino-1-(5-phospho-D-ribosyl)imidazole-4-carboxylate: step 1/2. The polypeptide is Phosphoribosylaminoimidazole-succinocarboxamide synthase (Hamiltonella defensa subsp. Acyrthosiphon pisum (strain 5AT)).